The chain runs to 286 residues: ATP synthase gamma chain (286 aa).

This sequence belongs to the ATPase gamma chain family. F-type ATPases have 2 components, CF(1) - the catalytic core - and CF(0) - the membrane proton channel. CF(1) has five subunits: alpha(3), beta(3), gamma(1), delta(1), epsilon(1). CF(0) has three main subunits: a, b and c.

The protein localises to the cell inner membrane. In terms of biological role, produces ATP from ADP in the presence of a proton gradient across the membrane. The gamma chain is believed to be important in regulating ATPase activity and the flow of protons through the CF(0) complex. The sequence is that of ATP synthase gamma chain from Shewanella sediminis (strain HAW-EB3).